The primary structure comprises 147 residues: UPF0306 protein YhbP (147 aa).

It belongs to the UPF0306 family.

This chain is UPF0306 protein YhbP, found in Salmonella choleraesuis (strain SC-B67).